The chain runs to 92 residues: Small ribosomal subunit protein uS19 (92 aa).

This sequence belongs to the universal ribosomal protein uS19 family.

In terms of biological role, protein S19 forms a complex with S13 that binds strongly to the 16S ribosomal RNA. The protein is Small ribosomal subunit protein uS19 of Allorhizobium ampelinum (strain ATCC BAA-846 / DSM 112012 / S4) (Agrobacterium vitis (strain S4)).